Consider the following 543-residue polypeptide: Gap junction alpha-10 protein (543 aa).

Over Met-1–Ser-16 the chain is Cytoplasmic. The helical transmembrane segment at His-17 to Leu-37 threads the bilayer. Residues Arg-38–Arg-76 are Extracellular-facing. Residues Phe-77 to Leu-97 traverse the membrane as a helical segment. The Cytoplasmic segment spans residues Tyr-98–Ser-165. The chain crosses the membrane as a helical span at residues Val-166 to Leu-186. The Extracellular segment spans residues Tyr-187 to Thr-209. Residues Ile-210 to Ile-230 form a helical membrane-spanning segment. Residues Phe-231–Ser-543 lie on the Cytoplasmic side of the membrane. 2 disordered regions span residues Pro-306–Gly-359 and Pro-379–Arg-424. Basic and acidic residues predominate over residues Asn-317 to His-328. Polar residues predominate over residues Ala-344–Gly-359. The segment covering Thr-400–Met-413 has biased composition (basic and acidic residues).

Belongs to the connexin family. Alpha-type (group II) subfamily. A connexon is composed of a hexamer of connexins. In terms of tissue distribution, expressed in skeletal muscle and heart.

It localises to the cell membrane. The protein localises to the cell junction. It is found in the gap junction. Functionally, one gap junction consists of a cluster of closely packed pairs of transmembrane channels, the connexons, through which materials of low MW diffuse from one cell to a neighboring cell. Involved in tracer coupling between horizontal cells of the retina. May play a role in the regulation of horizontal cell patterning. The polypeptide is Gap junction alpha-10 protein (GJA10) (Homo sapiens (Human)).